Consider the following 129-residue polypeptide: ATP synthase epsilon chain (129 aa).

Belongs to the ATPase epsilon chain family. As to quaternary structure, F-type ATPases have 2 components, CF(1) - the catalytic core - and CF(0) - the membrane proton channel. CF(1) has five subunits: alpha(3), beta(3), gamma(1), delta(1), epsilon(1). CF(0) has three main subunits: a, b and c.

The protein localises to the cell inner membrane. In terms of biological role, produces ATP from ADP in the presence of a proton gradient across the membrane. The polypeptide is ATP synthase epsilon chain (Campylobacter jejuni subsp. jejuni serotype O:6 (strain 81116 / NCTC 11828)).